Here is a 472-residue protein sequence, read N- to C-terminus: Siroheme synthase (472 aa).

The interval 1–203 (MNYLPIFIDI…GKIQEAKADL (203 aa)) is precorrin-2 dehydrogenase /sirohydrochlorin ferrochelatase. Residues 22–23 (DI) and 43–44 (KS) each bind NAD(+). Ser128 is modified (phosphoserine). The uroporphyrinogen-III C-methyltransferase stretch occupies residues 216-472 (GEVYLVGGGP…SSKKSYLFGG (257 aa)). Pro225 serves as a coordination point for S-adenosyl-L-methionine. Asp248 (proton acceptor) is an active-site residue. The active-site Proton donor is the Lys270. Residues 301 to 303 (GGD), Ile306, 331 to 332 (TA), Met383, and Gly412 contribute to the S-adenosyl-L-methionine site.

In the N-terminal section; belongs to the precorrin-2 dehydrogenase / sirohydrochlorin ferrochelatase family. The protein in the C-terminal section; belongs to the precorrin methyltransferase family.

It carries out the reaction uroporphyrinogen III + 2 S-adenosyl-L-methionine = precorrin-2 + 2 S-adenosyl-L-homocysteine + H(+). The enzyme catalyses precorrin-2 + NAD(+) = sirohydrochlorin + NADH + 2 H(+). It catalyses the reaction siroheme + 2 H(+) = sirohydrochlorin + Fe(2+). Its pathway is cofactor biosynthesis; adenosylcobalamin biosynthesis; precorrin-2 from uroporphyrinogen III: step 1/1. The protein operates within cofactor biosynthesis; adenosylcobalamin biosynthesis; sirohydrochlorin from precorrin-2: step 1/1. It functions in the pathway porphyrin-containing compound metabolism; siroheme biosynthesis; precorrin-2 from uroporphyrinogen III: step 1/1. It participates in porphyrin-containing compound metabolism; siroheme biosynthesis; siroheme from sirohydrochlorin: step 1/1. Its pathway is porphyrin-containing compound metabolism; siroheme biosynthesis; sirohydrochlorin from precorrin-2: step 1/1. In terms of biological role, multifunctional enzyme that catalyzes the SAM-dependent methylations of uroporphyrinogen III at position C-2 and C-7 to form precorrin-2 via precorrin-1. Then it catalyzes the NAD-dependent ring dehydrogenation of precorrin-2 to yield sirohydrochlorin. Finally, it catalyzes the ferrochelation of sirohydrochlorin to yield siroheme. The sequence is that of Siroheme synthase from Ruthia magnifica subsp. Calyptogena magnifica.